Consider the following 574-residue polypeptide: High-affinity methionine permease (574 aa).

The Cytoplasmic segment spans residues Met1–Leu61. Residue Lys28 forms a Glycyl lysine isopeptide (Lys-Gly) (interchain with G-Cter in ubiquitin) linkage. A helical membrane pass occupies residues Gly62–Val82. Residues Ser83–Ser92 lie on the Extracellular side of the membrane. The helical transmembrane segment at Val93–Val113 threads the bilayer. At Tyr114–Phe140 the chain is on the cytoplasmic side. Residues Phe141–Ile161 traverse the membrane as a helical segment. Topologically, residues Asn162–Gly182 are extracellular. A helical transmembrane segment spans residues Ile183–Leu203. Topologically, residues Tyr204–Asn207 are cytoplasmic. The chain crosses the membrane as a helical span at residues Ile208–Leu228. At Gly229–Thr293 the chain is on the extracellular side. The helical transmembrane segment at Ser294–Pro314 threads the bilayer. Residues Lys315–Arg340 are Cytoplasmic-facing. Residues Ala341–Gln361 form a helical membrane-spanning segment. Residues Gly362–Asn418 are Extracellular-facing. Residues Leu419–Tyr439 traverse the membrane as a helical segment. The Cytoplasmic portion of the chain corresponds to Trp440 to Ala455. The chain crosses the membrane as a helical span at residues Gly456–Val476. The Extracellular portion of the chain corresponds to Pro477 to Tyr490. Residues Trp491 to Trp511 form a helical membrane-spanning segment. The Cytoplasmic portion of the chain corresponds to Ala512–Leu574. Residue Thr552 is modified to Phosphothreonine. Position 573 is a phosphoserine (Ser573).

To yeast low affinity methionine permease (MUP3).

The protein localises to the membrane. Functionally, high affinity permease for methionine. This chain is High-affinity methionine permease (MUP1), found in Saccharomyces cerevisiae (strain ATCC 204508 / S288c) (Baker's yeast).